The primary structure comprises 1356 residues: Serine/threonine-protein kinase PSK1 (1356 aa).

Serine 10 bears the Phosphoserine mark. The interval lysine 20–leucine 115 is disordered. Composition is skewed to polar residues over residues lysine 26–threonine 37 and tyrosine 54–proline 64. Over residues leucine 99–leucine 115 the composition is skewed to low complexity. 5 positions are modified to phosphoserine: serine 192, serine 202, serine 255, serine 286, and serine 327. Positions arginine 450–glycine 518 constitute a PAS 1 domain. Residues proline 592–serine 608 are compositionally biased toward low complexity. Disordered stretches follow at residues proline 592–serine 612 and tyrosine 627–serine 660. The 70-residue stretch at leucine 738 to aspartate 807 folds into the PAS 2 domain. The residue at position 926 (serine 926) is a Phosphoserine. A disordered region spans residues aspartate 948–glycine 972. Positions histidine 952–glutamate 961 are enriched in polar residues. Phosphoserine occurs at positions 1018, 1023, 1035, and 1055. Positions threonine 1021 to lysine 1032 are enriched in polar residues. Residues threonine 1021 to asparagine 1066 form a disordered region. Phosphothreonine is present on threonine 1079. The 259-residue stretch at phenylalanine 1096–leucine 1354 folds into the Protein kinase domain. ATP is bound by residues methionine 1102–valine 1110 and lysine 1125. The Proton acceptor role is filled by aspartate 1230.

It belongs to the protein kinase superfamily. Ser/Thr protein kinase family.

It is found in the cytoplasm. The catalysed reaction is L-seryl-[protein] + ATP = O-phospho-L-seryl-[protein] + ADP + H(+). It carries out the reaction L-threonyl-[protein] + ATP = O-phospho-L-threonyl-[protein] + ADP + H(+). In terms of biological role, serine/threonine-protein kinase involved in the control of sugar metabolism and translation. Phosphorylates UGP1, which is required for normal glycogen and beta-(1,6)-glucan synthesis. This phosphorylation shifts glucose partitioning toward cell wall glucan synthesis at the expense of glycogen synthesis. The chain is Serine/threonine-protein kinase PSK1 (PSK1) from Saccharomyces cerevisiae (strain ATCC 204508 / S288c) (Baker's yeast).